The chain runs to 30 residues: uncharacterized protein (30 aa).

This is an uncharacterized protein from Treponema pallidum (strain Nichols).